A 285-amino-acid chain; its full sequence is MPRYAQLVMGPAGSGKSTYCSTMVQHCGSLNRSVQVVNLDPAAEHFDYPVLADIRELIEVDDVMEDRSLRFGPNGGLVYCMEYFANNFDWLESCLGHTEDDYILFDCPGQIELYTHLPVMKYLVEQLQQWEFRVCGVFLVDSQFMVESFKFLSGVLAALSAMVSLEIPQCNIMTKMDLLGKKAKKEIEKFLDPDMYSMIEDTSNRFKSNKFKKLTEALCGLIDDYSMVRFLPFDRSDEECMNIVLQHIDFAIQYGEDLEFKEPKENEEDKSENFDEFFQDRADEP.

13-18 contacts GTP; it reads GSGKST. The short motif at 72–74 is the Gly-Pro-Asn (GPN)-loop; involved in dimer interface element; sequence GPN. 174–177 is a GTP binding site; that stretch reads TKMD. The interval 261–285 is disordered; it reads KEPKENEEDKSENFDEFFQDRADEP. The segment covering 265–277 has biased composition (acidic residues); it reads ENEEDKSENFDEF.

It belongs to the GPN-loop GTPase family. In terms of assembly, heterodimer with gpn1. Binds to RNA polymerase II (RNAPII).

Functionally, small GTPase required for proper localization of RNA polymerase II (RNAPII). May act at an RNAP assembly step prior to nuclear import. This chain is GPN-loop GTPase 3, found in Xenopus tropicalis (Western clawed frog).